Reading from the N-terminus, the 594-residue chain is MRLADARVAIEGVNLEIDGGRFAAKVVAGWEVAVEADIFCDGHDSIDAAVLHRQRGTDDWTEVRMEFLVNDRWQARVTFAENAFHELTFLAWRDLYTTWRKEVAKKLAAGQKIDLELEEGRRLLQSVETAGAEDRALVDRILGEDGADQEAGARFARMSSPEAVAAMKRCAPRTNLTCYKILPIFADREAAAFSAWYEMMPRSQSGDPERHGTFDDVIRKLPYVRDLGFDVLYFTPIHPIGRVNRKGRNNSLTPGPDDPGSPYAIGSEEGGHDAIHPELGDFESFGRLVEAAHAHGLEVALDFAIQCAPDHPWIREHPEWFDWRPDGTIKFAENPPKKYEDIVNVHFYRGALPELWYALRDVVLFWVEKGVKIFRVDNPHTKPFPFWEWMIGEVQSQHPDVIFLAEAFTRPKVMKRLGKVGYGQSYSYFTWRNTKAELIDYLTELTTEECRHYMRPNFFANTPDINPVYLQHSGRAGFRVRLALAATLGGNYGLYNGYEICEATPVPGKEEYFNSEKYQLRAWDFDQPGHIQDDIRLMNHIRRTHPAMRDFTRLRFYDAHNDSVLAYGKSTEDKQDFLLFHVNLDPHAAQTFEF.

The tract at residues 244–270 is disordered; sequence NRKGRNNSLTPGPDDPGSPYAIGSEEG. Alpha-maltose 1-phosphate is bound by residues Lys-246, Gln-306, and Asp-341. Asp-377 (nucleophile) is an active-site residue. Asn-378 lines the alpha-maltose 1-phosphate pocket. The Proton donor role is filled by Glu-406. 517–518 serves as a coordination point for alpha-maltose 1-phosphate; sequence KY.

Belongs to the glycosyl hydrolase 13 family. GlgE subfamily. In terms of assembly, homodimer.

It catalyses the reaction alpha-maltose 1-phosphate + [(1-&gt;4)-alpha-D-glucosyl](n) = [(1-&gt;4)-alpha-D-glucosyl](n+2) + phosphate. Its function is as follows. Maltosyltransferase that uses maltose 1-phosphate (M1P) as the sugar donor to elongate linear or branched alpha-(1-&gt;4)-glucans. Is involved in a branched alpha-glucan biosynthetic pathway from trehalose, together with TreS, Mak and GlgB. The polypeptide is Alpha-1,4-glucan:maltose-1-phosphate maltosyltransferase (Cereibacter sphaeroides (Rhodobacter sphaeroides)).